The primary structure comprises 607 residues: Elongation factor 4 (607 aa).

One can recognise a tr-type G domain in the interval 11–193; sequence ENIRNFSIIA…KIVEVVPPPE (183 aa). GTP contacts are provided by residues 23–28 and 140–143; these read DHGKST and NKID.

This sequence belongs to the TRAFAC class translation factor GTPase superfamily. Classic translation factor GTPase family. LepA subfamily.

The protein resides in the cell membrane. The catalysed reaction is GTP + H2O = GDP + phosphate + H(+). Functionally, required for accurate and efficient protein synthesis under certain stress conditions. May act as a fidelity factor of the translation reaction, by catalyzing a one-codon backward translocation of tRNAs on improperly translocated ribosomes. Back-translocation proceeds from a post-translocation (POST) complex to a pre-translocation (PRE) complex, thus giving elongation factor G a second chance to translocate the tRNAs correctly. Binds to ribosomes in a GTP-dependent manner. This Staphylococcus haemolyticus (strain JCSC1435) protein is Elongation factor 4.